The chain runs to 556 residues: 2-succinyl-5-enolpyruvyl-6-hydroxy-3-cyclohexene-1-carboxylate synthase (556 aa).

Belongs to the TPP enzyme family. MenD subfamily. Homodimer. The cofactor is Mg(2+). Mn(2+) serves as cofactor. Requires thiamine diphosphate as cofactor.

It carries out the reaction isochorismate + 2-oxoglutarate + H(+) = 5-enolpyruvoyl-6-hydroxy-2-succinyl-cyclohex-3-ene-1-carboxylate + CO2. It participates in quinol/quinone metabolism; 1,4-dihydroxy-2-naphthoate biosynthesis; 1,4-dihydroxy-2-naphthoate from chorismate: step 2/7. The protein operates within quinol/quinone metabolism; menaquinone biosynthesis. Functionally, catalyzes the thiamine diphosphate-dependent decarboxylation of 2-oxoglutarate and the subsequent addition of the resulting succinic semialdehyde-thiamine pyrophosphate anion to isochorismate to yield 2-succinyl-5-enolpyruvyl-6-hydroxy-3-cyclohexene-1-carboxylate (SEPHCHC). This is 2-succinyl-5-enolpyruvyl-6-hydroxy-3-cyclohexene-1-carboxylate synthase from Escherichia coli (strain SMS-3-5 / SECEC).